The sequence spans 725 residues: Phosphoribosylformylglycinamidine synthase subunit PurL (725 aa).

His-42 is a catalytic residue. ATP contacts are provided by Tyr-45 and Lys-84. Residue Glu-86 participates in Mg(2+) binding. Substrate is bound by residues 87–90 and Arg-109; that span reads SHNH. The active-site Proton acceptor is His-88. Asp-110 lines the Mg(2+) pocket. Position 237 (Gln-237) interacts with substrate. Mg(2+) is bound at residue Asp-265. 309–311 is a binding site for substrate; the sequence is ESQ. 2 residues coordinate ATP: Asp-491 and Gly-528. Residue Asn-529 participates in Mg(2+) binding. Position 531 (Ser-531) interacts with substrate.

It belongs to the FGAMS family. As to quaternary structure, monomer. Part of the FGAM synthase complex composed of 1 PurL, 1 PurQ and 2 PurS subunits.

It is found in the cytoplasm. The enzyme catalyses N(2)-formyl-N(1)-(5-phospho-beta-D-ribosyl)glycinamide + L-glutamine + ATP + H2O = 2-formamido-N(1)-(5-O-phospho-beta-D-ribosyl)acetamidine + L-glutamate + ADP + phosphate + H(+). It functions in the pathway purine metabolism; IMP biosynthesis via de novo pathway; 5-amino-1-(5-phospho-D-ribosyl)imidazole from N(2)-formyl-N(1)-(5-phospho-D-ribosyl)glycinamide: step 1/2. Part of the phosphoribosylformylglycinamidine synthase complex involved in the purines biosynthetic pathway. Catalyzes the ATP-dependent conversion of formylglycinamide ribonucleotide (FGAR) and glutamine to yield formylglycinamidine ribonucleotide (FGAM) and glutamate. The FGAM synthase complex is composed of three subunits. PurQ produces an ammonia molecule by converting glutamine to glutamate. PurL transfers the ammonia molecule to FGAR to form FGAM in an ATP-dependent manner. PurS interacts with PurQ and PurL and is thought to assist in the transfer of the ammonia molecule from PurQ to PurL. The sequence is that of Phosphoribosylformylglycinamidine synthase subunit PurL from Campylobacter lari (strain RM2100 / D67 / ATCC BAA-1060).